A 491-amino-acid polypeptide reads, in one-letter code: Bifunctional protein HldE (491 aa).

Positions 1–330 are ribokinase; that stretch reads MDRKMVESLF…AAVSLEHRDS (330 aa). Residue 205 to 208 coordinates ATP; it reads NRKE. Asp-275 is an active-site residue. Residues 356–491 are cytidylyltransferase; that stretch reads FTNGCFDLLH…KVLERYTDEQ (136 aa).

The protein in the N-terminal section; belongs to the carbohydrate kinase PfkB family. This sequence in the C-terminal section; belongs to the cytidylyltransferase family. As to quaternary structure, homodimer.

It carries out the reaction D-glycero-beta-D-manno-heptose 7-phosphate + ATP = D-glycero-beta-D-manno-heptose 1,7-bisphosphate + ADP + H(+). The enzyme catalyses D-glycero-beta-D-manno-heptose 1-phosphate + ATP + H(+) = ADP-D-glycero-beta-D-manno-heptose + diphosphate. The protein operates within nucleotide-sugar biosynthesis; ADP-L-glycero-beta-D-manno-heptose biosynthesis; ADP-L-glycero-beta-D-manno-heptose from D-glycero-beta-D-manno-heptose 7-phosphate: step 1/4. It functions in the pathway nucleotide-sugar biosynthesis; ADP-L-glycero-beta-D-manno-heptose biosynthesis; ADP-L-glycero-beta-D-manno-heptose from D-glycero-beta-D-manno-heptose 7-phosphate: step 3/4. In terms of biological role, catalyzes the phosphorylation of D-glycero-D-manno-heptose 7-phosphate at the C-1 position to selectively form D-glycero-beta-D-manno-heptose-1,7-bisphosphate. Its function is as follows. Catalyzes the ADP transfer from ATP to D-glycero-beta-D-manno-heptose 1-phosphate, yielding ADP-D-glycero-beta-D-manno-heptose. The protein is Bifunctional protein HldE of Trichlorobacter lovleyi (strain ATCC BAA-1151 / DSM 17278 / SZ) (Geobacter lovleyi).